The primary structure comprises 290 residues: Nucleotide-binding protein Clos_0574 (290 aa).

8-15 contacts ATP; that stretch reads GLSGAGKS. 59 to 62 serves as a coordination point for GTP; that stretch reads DIRG.

The protein belongs to the RapZ-like family.

Displays ATPase and GTPase activities. The chain is Nucleotide-binding protein Clos_0574 from Alkaliphilus oremlandii (strain OhILAs) (Clostridium oremlandii (strain OhILAs)).